Here is a 446-residue protein sequence, read N- to C-terminus: tRNA modification GTPase MnmE (446 aa).

(6S)-5-formyl-5,6,7,8-tetrahydrofolate contacts are provided by Arg22, Glu80, and Lys119. In terms of domain architecture, TrmE-type G spans Gly215–Gly370. A K(+)-binding site is contributed by Asn225. Residues Asn225–Thr230, Thr244–Thr250, and Asp269–Gly272 each bind GTP. A Mg(2+)-binding site is contributed by Ser229. Residues Thr244, Ile246, and Thr249 each coordinate K(+). Thr250 contacts Mg(2+). Lys446 lines the (6S)-5-formyl-5,6,7,8-tetrahydrofolate pocket.

It belongs to the TRAFAC class TrmE-Era-EngA-EngB-Septin-like GTPase superfamily. TrmE GTPase family. Homodimer. Heterotetramer of two MnmE and two MnmG subunits. K(+) is required as a cofactor.

Its subcellular location is the cytoplasm. Its function is as follows. Exhibits a very high intrinsic GTPase hydrolysis rate. Involved in the addition of a carboxymethylaminomethyl (cmnm) group at the wobble position (U34) of certain tRNAs, forming tRNA-cmnm(5)s(2)U34. The polypeptide is tRNA modification GTPase MnmE (Legionella pneumophila (strain Corby)).